A 453-amino-acid chain; its full sequence is C4-dicarboxylate TRAP transporter large permease protein DctM (453 aa).

The next 13 helical transmembrane spans lie at 2–22, 50–70, 82–102, 104–124, 139–159, 172–192, 217–237, 243–263, 289–309, 326–346, 356–376, 380–400, and 417–437; these read AVALLFILVIGMMIVGVPIAI, AFAGHYTLLAIPFFILASTFM, FAIAMVGWFRGGLAIASVVAC, MFAALSGSSPATVVAIGSIVI, GVICNAGTLGILIPPSIVMVV, FLGGVVPGLLAGLMLIIAIYI, ASWGLLLVVIILGGIYGGIFT, AVAAVYSFFIANFIYRDMGPF, LYDAGKLTIMLMFIIANALIL, MLSAGLGPITFLIVVNLILLV, LLVIVAPLVFPIAIALGIDPI, IMMVVNMEIGMITPPVGLNLF, and ALPWVGVMFLFLIIVTYVPWV.

It belongs to the TRAP transporter large permease family. The complex comprises the extracytoplasmic solute receptor protein DctP, and the two transmembrane proteins DctQ and DctM.

It is found in the cell inner membrane. Functionally, part of the tripartite ATP-independent periplasmic (TRAP) transport system DctPQM involved in C4-dicarboxylates uptake. The protein is C4-dicarboxylate TRAP transporter large permease protein DctM of Vibrio cholerae serotype O1 (strain ATCC 39315 / El Tor Inaba N16961).